The following is a 230-amino-acid chain: Orotidine 5'-phosphate decarboxylase (230 aa).

Substrate-binding positions include aspartate 11, lysine 34, 61–70 (DLKLHDIPNT), threonine 117, arginine 179, glutamine 188, glycine 208, and arginine 209. The active-site Proton donor is lysine 63.

This sequence belongs to the OMP decarboxylase family. Type 1 subfamily. As to quaternary structure, homodimer.

It carries out the reaction orotidine 5'-phosphate + H(+) = UMP + CO2. The protein operates within pyrimidine metabolism; UMP biosynthesis via de novo pathway; UMP from orotate: step 2/2. Its function is as follows. Catalyzes the decarboxylation of orotidine 5'-monophosphate (OMP) to uridine 5'-monophosphate (UMP). The protein is Orotidine 5'-phosphate decarboxylase of Streptococcus pyogenes serotype M18 (strain MGAS8232).